The following is a 297-amino-acid chain: Aspartate carbamoyltransferase catalytic subunit (297 aa).

Carbamoyl phosphate contacts are provided by Arg49 and Thr50. L-aspartate is bound at residue Lys77. Carbamoyl phosphate contacts are provided by Arg99, His129, and Gln132. L-aspartate-binding residues include Arg162 and Arg215. Carbamoyl phosphate-binding residues include Gly256 and Pro257.

Belongs to the aspartate/ornithine carbamoyltransferase superfamily. ATCase family. In terms of assembly, heterododecamer (2C3:3R2) of six catalytic PyrB chains organized as two trimers (C3), and six regulatory PyrI chains organized as three dimers (R2).

It catalyses the reaction carbamoyl phosphate + L-aspartate = N-carbamoyl-L-aspartate + phosphate + H(+). Its pathway is pyrimidine metabolism; UMP biosynthesis via de novo pathway; (S)-dihydroorotate from bicarbonate: step 2/3. Functionally, catalyzes the condensation of carbamoyl phosphate and aspartate to form carbamoyl aspartate and inorganic phosphate, the committed step in the de novo pyrimidine nucleotide biosynthesis pathway. This is Aspartate carbamoyltransferase catalytic subunit from Legionella pneumophila (strain Paris).